Here is a 156-residue protein sequence, read N- to C-terminus: uncharacterized protein (156 aa).

The N-acetyltransferase domain occupies 11–156; it reads EEFRSYLTYT…ETDVVMSKKL (146 aa).

The protein belongs to the acetyltransferase family. Homodimer.

This is an uncharacterized protein from Bacillus subtilis (strain 168).